The following is a 430-amino-acid chain: Peptidoglycan DD-endopeptidase ShyA (430 aa).

Residues 1 to 35 (MISKSIILRFSELSMRKKATLVGLPLLAVAAISSS) form the signal peptide. 3 residues coordinate Zn(2+): His-297, Asp-301, and His-378.

This sequence belongs to the peptidase M23B family. Zn(2+) serves as cofactor.

It is found in the periplasm. It participates in cell wall degradation; peptidoglycan degradation. Reduced activity in 0.5 mM EDTA and a complete loss of activity at higher EDTA concentrations. The effect of EDTA can be reversed by addition of 1 mM ZnCl(2). Conformational switching between open (catalytically active) and closed (catalytically inactive) conformation of this protein is suggested mechanism of its regulation. The signal or inducer of the conformational shift to the open form unmasking the active site is currently not understood. Cell wall peptidoglycan (PG) DD-endopeptidase essential for cell growth and elongation. Hydrolyzes peptide cross-links which covalently connect adjacent PG strands probably to allow insertion of new glycans and thus cell wall expansion. Degrades purified whole PG sacculi in vitro. Releases predominantly short glycan chains from the PG. Cleaves D,D cross-linked muropeptides specifically preferring dimeric tetrapeptide-tetrapeptide (D44) substrates and has only little activity on dimeric tetrapeptide-pentapeptide (D45) substrates. Also converts more than 50% of tetrapeptide-tripeptide (D43) to product as well as more than 50% of D43M, which contains D-Met instead of D-Ala in the fourth position of the acceptor moiety. Cleaves the D,D bond between diaminopimelic acid (DAP) and D-Ala of the PG substrate in vitro. No cleavage of L,D bond connecting two DAP moieties. The polypeptide is Peptidoglycan DD-endopeptidase ShyA (Vibrio cholerae serotype O1 (strain ATCC 39315 / El Tor Inaba N16961)).